Consider the following 890-residue polypeptide: Translation initiation factor IF-2 (890 aa).

The interval 45-304 is disordered; sequence LIDHLNQKNS…LQQGFQKPAQ (260 aa). Over residues 67–81 the composition is skewed to polar residues; it reads STLNIPGTGGKSKSV. Over residues 92–217 the composition is skewed to basic and acidic residues; sequence VKRDPQEAER…RMAEENKWTD (126 aa). Over residues 252–266 the composition is skewed to basic residues; it reads GRGRNAKAARPKKGN. Positions 267–280 are enriched in basic and acidic residues; the sequence is KHAESKADREEARA. Residues 389–558 enclose the tr-type G domain; the sequence is PRAPVVTIMG…LLQAEVLELK (170 aa). A G1 region spans residues 398–405; that stretch reads GHVDHGKT. 398–405 contacts GTP; sequence GHVDHGKT. Residues 423-427 are G2; the sequence is GITQH. Residues 444–447 form a G3 region; the sequence is DTPG. GTP is bound by residues 444–448 and 498–501; these read DTPGH and NKID. Residues 498–501 form a G4 region; that stretch reads NKID. The G5 stretch occupies residues 534–536; sequence SAK. Position 808 is an N6-acetyllysine (Lys-808).

Belongs to the TRAFAC class translation factor GTPase superfamily. Classic translation factor GTPase family. IF-2 subfamily.

It is found in the cytoplasm. Its function is as follows. One of the essential components for the initiation of protein synthesis. Protects formylmethionyl-tRNA from spontaneous hydrolysis and promotes its binding to the 30S ribosomal subunits. Also involved in the hydrolysis of GTP during the formation of the 70S ribosomal complex. This chain is Translation initiation factor IF-2, found in Shigella sonnei (strain Ss046).